We begin with the raw amino-acid sequence, 150 residues long: Large ribosomal subunit protein bL9 (150 aa).

Belongs to the bacterial ribosomal protein bL9 family.

In terms of biological role, binds to the 23S rRNA. This is Large ribosomal subunit protein bL9 from Neisseria gonorrhoeae.